The primary structure comprises 554 residues: Eukaryotic translation initiation factor 3 subunit D-2 (554 aa).

The disordered stretch occupies residues 116–149; that stretch reads RGNAAIGGGQGGAGGTGGAGVGNKYGKGRDMRRG. The segment covering 120–140 has biased composition (gly residues); the sequence is AIGGGQGGAGGTGGAGVGNKY. Positions 291 to 305 are RNA gate; that stretch reads QFDLLTVNETALEPP. Residues 532 to 554 form a disordered region; the sequence is FDSDGNDDEETSDDRPFLKSLGN.

It belongs to the eIF-3 subunit D family. In terms of assembly, component of the eukaryotic translation initiation factor 3 (eIF-3) complex. The eIF-3 complex interacts with pix.

Its subcellular location is the cytoplasm. Its function is as follows. mRNA cap-binding component of the eukaryotic translation initiation factor 3 (eIF-3) complex, which is involved in protein synthesis of a specialized repertoire of mRNAs and, together with other initiation factors, stimulates binding of mRNA and methionyl-tRNAi to the 40S ribosome. The eIF-3 complex specifically targets and initiates translation of a subset of mRNAs involved in cell proliferation. In the eIF-3 complex, eif3d specifically recognizes and binds the 7-methylguanosine cap of a subset of mRNAs. In Drosophila virilis (Fruit fly), this protein is Eukaryotic translation initiation factor 3 subunit D-2.